Here is a 141-residue protein sequence, read N- to C-terminus: Large-conductance mechanosensitive channel (141 aa).

Transmembrane regions (helical) follow at residues 21–41 (VGVI…GDLI) and 85–105 (GSFL…FMMV).

This sequence belongs to the MscL family. As to quaternary structure, homopentamer.

Its subcellular location is the cell inner membrane. Its function is as follows. Channel that opens in response to stretch forces in the membrane lipid bilayer. May participate in the regulation of osmotic pressure changes within the cell. This is Large-conductance mechanosensitive channel from Dechloromonas aromatica (strain RCB).